Here is a 255-residue protein sequence, read N- to C-terminus: BTB/POZ domain-containing protein KCTD14 (255 aa).

Positions methionine 1 to proline 29 are disordered. A BTB domain is found at threonine 33–glycine 130.

This chain is BTB/POZ domain-containing protein KCTD14 (KCTD14), found in Homo sapiens (Human).